A 202-amino-acid polypeptide reads, in one-letter code: Prostamide/prostaglandin F synthase (202 aa).

The residue at position 108 (Y108) is a Phosphotyrosine.

Belongs to the peroxiredoxin-like PRXL2 family. Prostamide/prostaglandin F synthase subfamily.

The protein localises to the cytoplasm. Its subcellular location is the cytosol. It catalyses the reaction prostaglandin H2 + [thioredoxin]-dithiol = prostaglandin F2alpha + [thioredoxin]-disulfide. It carries out the reaction prostamide F2alpha + [thioredoxin]-disulfide = prostamide H2 + [thioredoxin]-dithiol. In terms of biological role, catalyzes the reduction of prostaglandin-ethanolamide H(2) (prostamide H(2)) to prostamide F(2alpha) with NADPH as proton donor. Also able to reduce prostaglandin H(2) to prostaglandin F(2alpha). The sequence is that of Prostamide/prostaglandin F synthase (PRXL2B) from Sus scrofa (Pig).